We begin with the raw amino-acid sequence, 770 residues long: Probable methyltransferase PMT25 (770 aa).

Residues 1–17 lie on the Cytoplasmic side of the membrane; it reads MAMGKYSRVDGKKSSSY. A helical; Signal-anchor for type II membrane protein membrane pass occupies residues 18–38; the sequence is GLTITIVLLLSLCLVGTWMFM. Residues 39–770 lie on the Lumenal side of the membrane; it reads SSWSAPADSA…ETETIKSAIA (732 aa). The interval 44–238 is disordered; it reads PADSAGYSST…SSISKDQSSY (195 aa). A compositionally biased stretch (basic and acidic residues) spans 55–79; it reads TAKDVSKNDLRKEEGDRDPKNFSDE. Asparagine 75 and asparagine 107 each carry an N-linked (GlcNAc...) asparagine glycan. Over residues 92-109 the composition is skewed to polar residues; it reads QVKTDSENSAEGNQVNES. Basic and acidic residues-rich tracts occupy residues 110-124 and 131-177; these read SGEK…KESD and DGEK…KAEE. Residues asparagine 163 and asparagine 178 are each glycosylated (N-linked (GlcNAc...) asparagine). Polar residues-rich tracts occupy residues 205–220 and 227–238; these read ESST…LVES and QQSSISKDQSSY. Residues asparagine 244 and asparagine 363 are each glycosylated (N-linked (GlcNAc...) asparagine).

The protein belongs to the methyltransferase superfamily.

The protein resides in the golgi apparatus membrane. This chain is Probable methyltransferase PMT25, found in Arabidopsis thaliana (Mouse-ear cress).